The chain runs to 361 residues: Queuine tRNA-ribosyltransferase (361 aa).

The active-site Proton acceptor is the aspartate 92. Residues 92–96, aspartate 146, glutamine 189, and glycine 216 contribute to the substrate site; that span reads DSGGF. The tract at residues 247 to 253 is RNA binding; that stretch reads GVGKPAD. The active-site Nucleophile is aspartate 266. The interval 271 to 275 is RNA binding; important for wobble base 34 recognition; that stretch reads TRSGR. 4 residues coordinate Zn(2+): cysteine 304, cysteine 306, cysteine 309, and histidine 335.

The protein belongs to the queuine tRNA-ribosyltransferase family. In terms of assembly, homodimer. Within each dimer, one monomer is responsible for RNA recognition and catalysis, while the other monomer binds to the replacement base PreQ1. Zn(2+) serves as cofactor.

It catalyses the reaction 7-aminomethyl-7-carbaguanine + guanosine(34) in tRNA = 7-aminomethyl-7-carbaguanosine(34) in tRNA + guanine. The protein operates within tRNA modification; tRNA-queuosine biosynthesis. Functionally, catalyzes the base-exchange of a guanine (G) residue with the queuine precursor 7-aminomethyl-7-deazaguanine (PreQ1) at position 34 (anticodon wobble position) in tRNAs with GU(N) anticodons (tRNA-Asp, -Asn, -His and -Tyr). Catalysis occurs through a double-displacement mechanism. The nucleophile active site attacks the C1' of nucleotide 34 to detach the guanine base from the RNA, forming a covalent enzyme-RNA intermediate. The proton acceptor active site deprotonates the incoming PreQ1, allowing a nucleophilic attack on the C1' of the ribose to form the product. After dissociation, two additional enzymatic reactions on the tRNA convert PreQ1 to queuine (Q), resulting in the hypermodified nucleoside queuosine (7-(((4,5-cis-dihydroxy-2-cyclopenten-1-yl)amino)methyl)-7-deazaguanosine). The protein is Queuine tRNA-ribosyltransferase of Rickettsia typhi (strain ATCC VR-144 / Wilmington).